We begin with the raw amino-acid sequence, 263 residues long: Hydroxyethylthiazole kinase (263 aa).

Residue methionine 45 coordinates substrate. Residues arginine 121 and serine 167 each coordinate ATP. Glycine 194 contacts substrate.

Belongs to the Thz kinase family. Mg(2+) serves as cofactor.

It carries out the reaction 5-(2-hydroxyethyl)-4-methylthiazole + ATP = 4-methyl-5-(2-phosphooxyethyl)-thiazole + ADP + H(+). Its pathway is cofactor biosynthesis; thiamine diphosphate biosynthesis; 4-methyl-5-(2-phosphoethyl)-thiazole from 5-(2-hydroxyethyl)-4-methylthiazole: step 1/1. In terms of biological role, catalyzes the phosphorylation of the hydroxyl group of 4-methyl-5-beta-hydroxyethylthiazole (THZ). In Vibrio parahaemolyticus serotype O3:K6 (strain RIMD 2210633), this protein is Hydroxyethylthiazole kinase.